A 490-amino-acid chain; its full sequence is Malonyl-[acyl-carrier protein] O-methyltransferase (490 aa).

The unknown stretch occupies residues 1-248; it reads MKLKRLYPPQ…AASSKLLIAQ (248 aa). Positions 249–490 are malonyl-CoA O-methyltransferase; the sequence is RFTKAIGTYP…HPIYIIAKKR (242 aa).

The protein belongs to the methyltransferase superfamily.

The enzyme catalyses malonyl-[ACP] + S-adenosyl-L-methionine = malonyl-[ACP] methyl ester + S-adenosyl-L-homocysteine. It participates in cofactor biosynthesis; biotin biosynthesis. Functionally, converts the free carboxyl group of a malonyl-thioester to its methyl ester by transfer of a methyl group from S-adenosyl-L-methionine (SAM). It allows to synthesize pimeloyl-ACP via the fatty acid synthetic pathway. This Bacteroides fragilis (strain 638R) protein is Malonyl-[acyl-carrier protein] O-methyltransferase (bioC).